A 279-amino-acid polypeptide reads, in one-letter code: Pantothenate synthetase (279 aa).

Position 30–37 (30–37 (MGALHAGH)) interacts with ATP. His37 acts as the Proton donor in catalysis. Gln61 lines the (R)-pantoate pocket. Gln61 lines the beta-alanine pocket. 147–150 (GEKD) contacts ATP. Gln153 contributes to the (R)-pantoate binding site. ATP-binding positions include Ala176 and 184 to 187 (LSSR).

Belongs to the pantothenate synthetase family. In terms of assembly, homodimer.

The protein localises to the cytoplasm. The enzyme catalyses (R)-pantoate + beta-alanine + ATP = (R)-pantothenate + AMP + diphosphate + H(+). It functions in the pathway cofactor biosynthesis; (R)-pantothenate biosynthesis; (R)-pantothenate from (R)-pantoate and beta-alanine: step 1/1. In terms of biological role, catalyzes the condensation of pantoate with beta-alanine in an ATP-dependent reaction via a pantoyl-adenylate intermediate. In Sphingopyxis alaskensis (strain DSM 13593 / LMG 18877 / RB2256) (Sphingomonas alaskensis), this protein is Pantothenate synthetase.